We begin with the raw amino-acid sequence, 298 residues long: 4-hydroxy-tetrahydrodipicolinate synthase (298 aa).

Thr-51 serves as a coordination point for pyruvate. Tyr-139 (proton donor/acceptor) is an active-site residue. Lys-167 acts as the Schiff-base intermediate with substrate in catalysis. Ile-209 contributes to the pyruvate binding site.

It belongs to the DapA family. In terms of assembly, homotetramer; dimer of dimers.

Its subcellular location is the cytoplasm. It catalyses the reaction L-aspartate 4-semialdehyde + pyruvate = (2S,4S)-4-hydroxy-2,3,4,5-tetrahydrodipicolinate + H2O + H(+). Its pathway is amino-acid biosynthesis; L-lysine biosynthesis via DAP pathway; (S)-tetrahydrodipicolinate from L-aspartate: step 3/4. In terms of biological role, catalyzes the condensation of (S)-aspartate-beta-semialdehyde [(S)-ASA] and pyruvate to 4-hydroxy-tetrahydrodipicolinate (HTPA). The polypeptide is 4-hydroxy-tetrahydrodipicolinate synthase (Histophilus somni (strain 129Pt) (Haemophilus somnus)).